A 103-amino-acid polypeptide reads, in one-letter code: Large ribosomal subunit protein uL24 (103 aa).

Belongs to the universal ribosomal protein uL24 family. Part of the 50S ribosomal subunit.

In terms of biological role, one of two assembly initiator proteins, it binds directly to the 5'-end of the 23S rRNA, where it nucleates assembly of the 50S subunit. Functionally, one of the proteins that surrounds the polypeptide exit tunnel on the outside of the subunit. This is Large ribosomal subunit protein uL24 from Haemophilus influenzae (strain 86-028NP).